A 415-amino-acid polypeptide reads, in one-letter code: Peptide chain release factor subunit 1 (415 aa).

This sequence belongs to the eukaryotic release factor 1 family. In terms of assembly, heterodimer of two subunits, one of which binds GTP.

The protein localises to the cytoplasm. Directs the termination of nascent peptide synthesis (translation) in response to the termination codons UAA, UAG and UGA. This Thermococcus kodakarensis (strain ATCC BAA-918 / JCM 12380 / KOD1) (Pyrococcus kodakaraensis (strain KOD1)) protein is Peptide chain release factor subunit 1.